The following is a 68-amino-acid chain: ATP synthase F(0) complex subunit 8 (68 aa).

Residues 8-24 form a helical membrane-spanning segment; the sequence is TWFTTILSMFLTLFIIF. Residue K54 is modified to N6-acetyllysine; alternate. At K54 the chain carries N6-succinyllysine; alternate. K57 is modified (N6-acetyllysine).

The protein belongs to the ATPase protein 8 family. In terms of assembly, component of the ATP synthase complex composed at least of ATP5F1A/subunit alpha, ATP5F1B/subunit beta, ATP5MC1/subunit c (homooctomer), MT-ATP6/subunit a, MT-ATP8/subunit 8, ATP5ME/subunit e, ATP5MF/subunit f, ATP5MG/subunit g, ATP5MK/subunit k, ATP5MJ/subunit j, ATP5F1C/subunit gamma, ATP5F1D/subunit delta, ATP5F1E/subunit epsilon, ATP5PF/subunit F6, ATP5PB/subunit b, ATP5PD/subunit d, ATP5PO/subunit OSCP. ATP synthase complex consists of a soluble F(1) head domain (subunits alpha(3) and beta(3)) - the catalytic core - and a membrane F(0) domain - the membrane proton channel (subunits c, a, 8, e, f, g, k and j). These two domains are linked by a central stalk (subunits gamma, delta, and epsilon) rotating inside the F1 region and a stationary peripheral stalk (subunits F6, b, d, and OSCP). Interacts with PRICKLE3.

The protein localises to the mitochondrion membrane. In terms of biological role, subunit 8, of the mitochondrial membrane ATP synthase complex (F(1)F(0) ATP synthase or Complex V) that produces ATP from ADP in the presence of a proton gradient across the membrane which is generated by electron transport complexes of the respiratory chain. ATP synthase complex consist of a soluble F(1) head domain - the catalytic core - and a membrane F(1) domain - the membrane proton channel. These two domains are linked by a central stalk rotating inside the F(1) region and a stationary peripheral stalk. During catalysis, ATP synthesis in the catalytic domain of F(1) is coupled via a rotary mechanism of the central stalk subunits to proton translocation. In vivo, can only synthesize ATP although its ATP hydrolase activity can be activated artificially in vitro. Part of the complex F(0) domain. The polypeptide is ATP synthase F(0) complex subunit 8 (Hippopotamus amphibius (Hippopotamus)).